We begin with the raw amino-acid sequence, 526 residues long: Cell adhesion molecule CEACAM1 (526 aa).

Positions 1-34 (MGHLSAPLHRVRVPWQGLLLTASLLTFWNPPTTA) are cleaved as a signal peptide. Residue Gln-35 is modified to Pyrrolidone carboxylic acid. The Ig-like V-type domain maps to 35 to 142 (QLTTESMPFN…EATGQFHVYP (108 aa)). Residues 35 to 428 (QLTTESMPFN…LPQENGLSPG (394 aa)) are Extracellular-facing. Residues 39–142 (ESMPFNVAEG…EATGQFHVYP (104 aa)) are required for homophilic binding. N-linked (GlcNAc...) asparagine glycans are attached at residues Asn-104, Asn-111, Asn-115, Asn-152, Asn-182, Asn-197, Asn-208, Asn-224, Asn-232, Asn-254, Asn-274, Asn-288, Asn-292, Asn-302, Asn-309, Asn-345, Asn-351, Asn-363, Asn-378, and Asn-405. 3 Ig-like C2-type domains span residues 145–232 (PKPS…VTLN), 237–317 (PDTP…KTII), and 323–413 (PVVA…IMLN). Residues Cys-167 and Cys-215 are joined by a disulfide bond. An intrachain disulfide couples Cys-259 to Cys-299. Cys-348 and Cys-396 are disulfide-bonded. A helical membrane pass occupies residues 429 to 452 (AIAGIVIGVVALVALIAVALACFL). The interaction with calmodulin stretch occupies residues 450 to 462 (CFLHFGKTGRASD). The segment at 452–526 (LHFGKTGRAS…EIIYSEVKKQ (75 aa)) is interaction with FLNA. The Cytoplasmic portion of the chain corresponds to 453–526 (HFGKTGRASD…EIIYSEVKKQ (74 aa)). The segment covering 461–482 (SDQRDLTEHKPSVSNHTQDHSN) has biased composition (basic and acidic residues). Residues 461–513 (SDQRDLTEHKPSVSNHTQDHSNDPPNKMNEVTYSTLNFEAQQPTQPTSASPSL) are disordered. A compositionally biased stretch (polar residues) spans 489-513 (NEVTYSTLNFEAQQPTQPTSASPSL). A required for interaction with PTPN11 and PTPN6 and for control of phosphorylation level region spans residues 489-526 (NEVTYSTLNFEAQQPTQPTSASPSLTATEIIYSEVKKQ). The residue at position 493 (Tyr-493) is a Phosphotyrosine; by SRC, LCK, INSR and EGFR. Ser-508 carries the post-translational modification Phosphoserine. At Tyr-520 the chain carries Phosphotyrosine; by INSR, SRC and LCK. The essential for interaction with PTPN11 and PTPN6 stretch occupies residues 520–523 (YSEV).

The protein belongs to the immunoglobulin superfamily. CEA family. As to quaternary structure, monomer. Oligomer. Heterodimer. Homodimer. Cis-dimer/oligomer (via Ig-like C2-type and/or via cytoplasmic domains); induced by trans-homophilic cell adhesion through an allosteric mechanism transmitted by the Ig-like V-type domain, and is regulated by intracellular calcium and calmodulin. Interacts (via cytoplasmic domain) with calmodulin in a calcium dependent manner; reduces homophilic cell adhesion through dissociation of dimer. Isoform 1 interacts (via cytoplasmic domain) with PTPN11 (preferentially) and PTPN6; cis-homodimer form is preferred; this interaction is decreased by formation of Isoform 1 /Isoform 8 cis-heterodimers and is dependent on the monomer/dimer equilibrium; this interaction is phosphorylation-dependent. Isoform 1 interacts with LYN. Isoform 1 interacts (via cytoplasmic domain) with SRC (via SH2 domain); this interaction is regulated by trans-homophilic cell adhesion. Isoform 1 interacts (via cytoplasmic domain) with LCK; mediates phosphorylation at Tyr-493 and Tyr-520 resulting in PTPN6 association. Isoform 1 interacts with PTPN6; this interaction is phosphorylation-dependent and causes a profound decrease in TCR stimulation-induced CD247 and ZAP70 phosphorylation. Isoform 1 interacts with TCR/CD3 complex through TCR beta chain and CD3E; colocalizes at the cell surface and upon stimulation of the TCR/CD3 complex recruits PTPN6 in the TCR/CD3 complex, resulting in dephosphorylation of CD247 and ZAP70. Isoform 1 interacts (via cytoplasmic domain) with SHC1 (via SH2 domain); SHC1 mediates interaction with INSR or EGFR in a Ser-508 phosphorylation-dependent manner. Isoform 1 interacts with EGFR; the interaction is indirect. Isoform 1 interacts with CSF3R; down-regulates the CSF3R-STAT3 pathway through recruitment of PTPN6 that dephosphorylates CSF3R. Isoform 1 (phosphorylated form) interacts with TLR4 and SYK; recruits PTPN6 that dephosphorylates SYK, reducing the production of reactive oxygen species (ROS) and lysosome disruption, leading to a reduction of the inflammasome activity. Isoform 1 interacts with FLNA; inhibits cell migration and cell scattering by interfering with the interaction of FLNA with RALA. Isoform 1 interacts (via cytoplasmic domain) with PXN; the interaction is phosphotyrosyl-dependent. Isoform 1 interacts with KLRK1; recruits PTPN6 that dephosphorylates VAV1. Isoform 1 interacts with CEACAM8. Isoform 1 interacts with FASN; this interaction is insulin and phosphorylation-dependent; reduces fatty-acid synthase activity. Interacts (via Ig-like V-type) with HAVCR2 (via Ig-like V-type); facilitates the maturation and cell surface expression of HAVCR2 thereby regulating T cell tolerance induction. Isoform 8 interacts (via the cytoplasmic domain) with ANXA2; this interaction is regulated by phosphorylation and appears in the AIIt complex. Interacts (via Lewis X moieties) with CD209 (via C-type lectin domain); this interaction is regulated by the glycosylation pattern of CEACAM1 on cell types and regulates contact between dendritic cells and neutrophils. In terms of processing, phosphorylated on serine and tyrosine. Isoform 1 is phosphorylated on tyrosine by Src family kinases like SRC and LCK and by receptor like CSF3R, EGFR and INSR upon stimulation. Phosphorylated at Ser-508; mediates activity. Phosphorylated at Tyr-493; regulates activity. Phosphorylated at Tyr-493 by EGFR and INSR upon stimulation; this phosphorylation is Ser-508-phosphorylation-dependent; mediates cellular internalization; increases interaction with downstream proteins like SHC1 and FASN. Phosphorylated at Tyr-493 and Tyr-520 by LCK; mediates PTPN6 association and is regulated by homophilic ligation of CEACAM1 in the absence of T cell activation. Phosphorylated at Tyr-520; mediates interaction with PTPN11. Post-translationally, phosphorylated on serine and threonine. Expressed in columnar epithelial cells of the colon (at protein level). The predominant forms expressed by T cells are those containing a long cytoplasmic domain. Expressed in granulocytes and lymphocytes. Leukocytes only express isoforms 6 and isoform 1.

Its subcellular location is the cell membrane. It localises to the lateral cell membrane. It is found in the apical cell membrane. The protein localises to the basal cell membrane. The protein resides in the cell junction. Its subcellular location is the adherens junction. It localises to the secreted. It is found in the cytoplasmic vesicle. The protein localises to the secretory vesicle membrane. The protein resides in the cell projection. Its subcellular location is the microvillus membrane. In terms of biological role, cell adhesion protein that mediates homophilic cell adhesion in a calcium-independent manner. Plays a role as coinhibitory receptor in immune response, insulin action and also functions as an activator during angiogenesis. Its coinhibitory receptor function is phosphorylation- and PTPN6 -dependent, which in turn, suppress signal transduction of associated receptors by dephosphorylation of their downstream effectors. Plays a role in immune response, of T cells, natural killer (NK) and neutrophils. Upon TCR/CD3 complex stimulation, inhibits TCR-mediated cytotoxicity by blocking granule exocytosis by mediating homophilic binding to adjacent cells, allowing interaction with and phosphorylation by LCK and interaction with the TCR/CD3 complex which recruits PTPN6 resulting in dephosphorylation of CD247 and ZAP70. Also inhibits T cell proliferation and cytokine production through inhibition of JNK cascade and plays a crucial role in regulating autoimmunity and anti-tumor immunity by inhibiting T cell through its interaction with HAVCR2. Upon natural killer (NK) cells activation, inhibit KLRK1-mediated cytolysis of CEACAM1-bearing tumor cells by trans-homophilic interactions with CEACAM1 on the target cell and lead to cis-interaction between CEACAM1 and KLRK1, allowing PTPN6 recruitment and then VAV1 dephosphorylation. Upon neutrophils activation negatively regulates IL1B production by recruiting PTPN6 to a SYK-TLR4-CEACAM1 complex, that dephosphorylates SYK, reducing the production of reactive oxygen species (ROS) and lysosome disruption, which in turn, reduces the activity of the inflammasome. Down-regulates neutrophil production by acting as a coinhibitory receptor for CSF3R by down-regulating the CSF3R-STAT3 pathway through recruitment of PTPN6 that dephosphorylates CSF3R. Also regulates insulin action by promoting INS clearance and regulating lipogenesis in liver through regulating insulin signaling. Upon INS stimulation, undergoes phosphorylation by INSR leading to INS clearance by increasing receptor-mediated insulin endocytosis. This inernalization promotes interaction with FASN leading to receptor-mediated insulin degradation and to reduction of FASN activity leading to negative regulation of fatty acid synthesis. INSR-mediated phosphorylation also provokes a down-regulation of cell proliferation through SHC1 interaction resulting in decrease coupling of SHC1 to the MAPK3/ERK1-MAPK1/ERK2 and phosphatidylinositol 3-kinase pathways. Functions as activator in angiogenesis by promoting blood vessel remodeling through endothelial cell differentiation and migration and in arteriogenesis by increasing the number of collateral arteries and collateral vessel calibers after ischemia. Also regulates vascular permeability through the VEGFR2 signaling pathway resulting in control of nitric oxide production. Down-regulates cell growth in response to EGF through its interaction with SHC1 that mediates interaction with EGFR resulting in decrease coupling of SHC1 to the MAPK3/ERK1-MAPK1/ERK2 pathway. Negatively regulates platelet aggregation by decreasing platelet adhesion on type I collagen through the GPVI-FcRgamma complex. Inhibits cell migration and cell scattering through interaction with FLNA; interferes with the interaction of FLNA with RALA. Mediates bile acid transport activity in a phosphorylation dependent manner. Negatively regulates osteoclastogenesis. Functionally, cell adhesion protein that mediates homophilic cell adhesion in a calcium-independent manner. Promotes populations of T cells regulating IgA production and secretion associated with control of the commensal microbiota and resistance to enteropathogens. In Homo sapiens (Human), this protein is Cell adhesion molecule CEACAM1.